Here is a 409-residue protein sequence, read N- to C-terminus: All trans-polyprenyl-diphosphate synthase PDSS1 (409 aa).

The isopentenyl diphosphate site is built by Lys128, Arg131, and His167. Mg(2+) is bound by residues Asp174 and Asp178. Residue Arg184 coordinates isopentenyl diphosphate.

This sequence belongs to the FPP/GGPP synthase family. Heterotetramer composed of 2 PDSS1/DPS1 and 2 PDSS2/DLP1 subunits. Mg(2+) is required as a cofactor.

The protein resides in the mitochondrion. It catalyses the reaction 7 isopentenyl diphosphate + (2E,6E)-farnesyl diphosphate = all-trans-decaprenyl diphosphate + 7 diphosphate. The enzyme catalyses 6 isopentenyl diphosphate + (2E,6E)-farnesyl diphosphate = all-trans-nonaprenyl diphosphate + 6 diphosphate. Its pathway is cofactor biosynthesis; ubiquinone biosynthesis. In terms of biological role, heterotetrameric enzyme that catalyzes the condensation of farnesyl diphosphate (FPP), which acts as a primer, and isopentenyl diphosphate (IPP) to produce prenyl diphosphates of varying chain lengths and participates in the determination of the side chain of ubiquinone. Supplies nona and decaprenyl diphosphate, the precursors for the side chain of the isoprenoid quinones ubiquinone-9 (Q9)and ubiquinone-10 (Q10) respectively. The enzyme adds isopentenyl diphosphate molecules sequentially to farnesyl diphosphate with trans stereochemistry. The chain is All trans-polyprenyl-diphosphate synthase PDSS1 from Mus musculus (Mouse).